Here is a 360-residue protein sequence, read N- to C-terminus: Phospho-N-acetylmuramoyl-pentapeptide-transferase (360 aa).

Transmembrane regions (helical) follow at residues 21–41 (YITV…LWIG), 73–93 (TMGG…WANL), 94–114 (ANPY…IGFV), 132–152 (WKYF…YWLG), 168–188 (IMPQ…VGTG), 199–219 (GLAI…AWAT), 239–259 (VVVF…FNTY), 263–283 (VFMG…VAIL), 288–308 (FLLV…ILQV), and 338–358 (VIIR…VTLK).

It belongs to the glycosyltransferase 4 family. MraY subfamily. Mg(2+) serves as cofactor.

It is found in the cell inner membrane. It carries out the reaction UDP-N-acetyl-alpha-D-muramoyl-L-alanyl-gamma-D-glutamyl-meso-2,6-diaminopimeloyl-D-alanyl-D-alanine + di-trans,octa-cis-undecaprenyl phosphate = di-trans,octa-cis-undecaprenyl diphospho-N-acetyl-alpha-D-muramoyl-L-alanyl-D-glutamyl-meso-2,6-diaminopimeloyl-D-alanyl-D-alanine + UMP. The protein operates within cell wall biogenesis; peptidoglycan biosynthesis. Functionally, catalyzes the initial step of the lipid cycle reactions in the biosynthesis of the cell wall peptidoglycan: transfers peptidoglycan precursor phospho-MurNAc-pentapeptide from UDP-MurNAc-pentapeptide onto the lipid carrier undecaprenyl phosphate, yielding undecaprenyl-pyrophosphoryl-MurNAc-pentapeptide, known as lipid I. This chain is Phospho-N-acetylmuramoyl-pentapeptide-transferase, found in Haemophilus influenzae (strain PittEE).